A 260-amino-acid chain; its full sequence is Proteasome subunit alpha (260 aa).

A disordered region spans residues 241-260; the sequence is VEAEEVPEKEEDYSELDSNY. Positions 242-260 are enriched in acidic residues; sequence EAEEVPEKEEDYSELDSNY.

Belongs to the peptidase T1A family. In terms of assembly, the 20S proteasome core is composed of 14 alpha and 14 beta subunits that assemble into four stacked heptameric rings, resulting in a barrel-shaped structure. The two inner rings, each composed of seven catalytic beta subunits, are sandwiched by two outer rings, each composed of seven alpha subunits. The catalytic chamber with the active sites is on the inside of the barrel. Has a gated structure, the ends of the cylinder being occluded by the N-termini of the alpha-subunits. Is capped at one or both ends by the proteasome regulatory ATPase, PAN.

The protein resides in the cytoplasm. The formation of the proteasomal ATPase PAN-20S proteasome complex, via the docking of the C-termini of PAN into the intersubunit pockets in the alpha-rings, triggers opening of the gate for substrate entry. Interconversion between the open-gate and close-gate conformations leads to a dynamic regulation of the 20S proteasome proteolysis activity. In terms of biological role, component of the proteasome core, a large protease complex with broad specificity involved in protein degradation. The protein is Proteasome subunit alpha of Thermococcus sibiricus (strain DSM 12597 / MM 739).